The following is a 296-amino-acid chain: Cytidine deaminase (296 aa).

CMP/dCMP-type deaminase domains are found at residues 47–167 and 186–296; these read DSHE…FGPA and ESDD…VDPV. 88 to 90 provides a ligand contact to substrate; sequence NLE. Histidine 101 lines the Zn(2+) pocket. The Proton donor role is filled by glutamate 103. Residues cysteine 128 and cysteine 131 each coordinate Zn(2+).

Belongs to the cytidine and deoxycytidylate deaminase family. As to quaternary structure, homodimer. Zn(2+) serves as cofactor.

It carries out the reaction cytidine + H2O + H(+) = uridine + NH4(+). The enzyme catalyses 2'-deoxycytidine + H2O + H(+) = 2'-deoxyuridine + NH4(+). In terms of biological role, this enzyme scavenges exogenous and endogenous cytidine and 2'-deoxycytidine for UMP synthesis. The polypeptide is Cytidine deaminase (Shewanella amazonensis (strain ATCC BAA-1098 / SB2B)).